We begin with the raw amino-acid sequence, 292 residues long: Seed lectin (292 aa).

The signal sequence occupies residues 1–37 (MATSNSRPHLLQTHKPFSVVLAISITFFLLLLNKVNS). N-linked (GlcNAc...) asparagine glycans are attached at residues asparagine 82 and asparagine 154. Residues aspartate 163 and aspartate 165 each coordinate Mn(2+). Residues aspartate 165, histidine 167, asparagine 169, and aspartate 172 each coordinate Ca(2+). Mn(2+)-binding residues include aspartate 172 and histidine 177. Asparagine 186 carries N-linked (GlcNAc...) asparagine glycosylation.

The protein belongs to the leguminous lectin family.

Its function is as follows. Mannose/glucose-specific lectin. This is Seed lectin from Styphnolobium japonicum (Japanese pagoda tree).